The following is a 327-amino-acid chain: Cysteine synthase (327 aa).

At Lys65 the chain carries N6-(pyridoxal phosphate)lysine. Pyridoxal 5'-phosphate contacts are provided by residues Asn95, 200-204 (GTGGT), and Ser282.

Belongs to the cysteine synthase/cystathionine beta-synthase family. Pyridoxal 5'-phosphate is required as a cofactor.

It carries out the reaction O-acetyl-L-serine + hydrogen sulfide = L-cysteine + acetate. It functions in the pathway amino-acid biosynthesis; L-cysteine biosynthesis; L-cysteine from L-serine: step 2/2. This Aquifex aeolicus (strain VF5) protein is Cysteine synthase (cysM).